The sequence spans 299 residues: HTH-type transcriptional regulator CrgA (299 aa).

Positions 1–60 constitute an HTH lysR-type domain; sequence MKTNSEELTVFVQVVESGSFSRAAEQLAMANSAVSRIVKRLEEKLGVNLLNRTTRQLSLT. The H-T-H motif DNA-binding region spans 20 to 39; it reads FSRAAEQLAMANSAVSRIVK.

It belongs to the LysR transcriptional regulatory family. Forms oligomers. Forms an octomeric ring-like structure in solution. May form hexadecamers when bound to target DNA.

With respect to regulation, activation and repression activities are enhanced by the addition of alpha-methylene-gamma-butyrolactone (MBL), an inducer of NADPH:quinone oxidoreductase. Its function is as follows. Regulatory protein that activates transcription of mdaB, encoding a NADPH:quinone oxidoreductase, and represses its own transcription. Under the same experimental conditions, no regulation of transcription of pilus and capsule genes is detected. This chain is HTH-type transcriptional regulator CrgA, found in Neisseria meningitidis serogroup B (strain ATCC BAA-335 / MC58).